Consider the following 97-residue polypeptide: Large ribosomal subunit protein bL28 (97 aa).

Belongs to the bacterial ribosomal protein bL28 family.

The chain is Large ribosomal subunit protein bL28 from Rickettsia africae (strain ESF-5).